The sequence spans 262 residues: 2-oxo-tetronate isomerase (262 aa).

The active-site Proton donor/acceptor is the Glu143. Positions 143, 178, 204, and 240 each coordinate Mg(2+). Glu240 (proton donor/acceptor) is an active-site residue.

Belongs to the hyi family. OtnI subfamily.

The enzyme catalyses 2-dehydro-L-erythronate = 3-dehydro-L-erythronate. It carries out the reaction 2-dehydro-D-erythronate = 3-dehydro-D-erythronate. In terms of biological role, catalyzes the isomerization of 2-oxo-tetronate to 3-oxo-tetronate. The sequence is that of 2-oxo-tetronate isomerase from Pectobacterium atrosepticum (strain SCRI 1043 / ATCC BAA-672) (Erwinia carotovora subsp. atroseptica).